The chain runs to 471 residues: MKIKTRFAPSPTGYLHVGGARTALYSWLFARHHGGEFVLRIEDTDLERSTPEAIEAIMDGMNWLNLEWDEGPYFQTKRFDRYNAVIDEMLEAGTAYKCYCSKERLDQLREEQMAKGEKPRYDGRCRHSHEHHADDEPCVVRFANPQDGSVIFDDQIRGPIEFSNQELDDLIIRRTDGSPTYNFCVVVDDWDMEITHVIRGEDHINNTPRQINILKALNAPVPMYAHVSMINGDDGKKLSKRHGAVSVMQYRDDGYLPEALLNYLVRLGWSNGDQEIFTREEMINLFSLGAVSKSSSAFNTDKLLWLNHHYINTLAPEYVATHLQWHIEQENIDTRNGPQLAELVKLLGERCKTLKEMAQSCRYFYEDFSEFDADAAKKHLRPVARQPLEVVRDKLSAITDWSAENVHHAIQSTAEELEVGMGKVGMPLRVAVTGAGQSPALDVTVHAIGKTRSIERINKALGFIAERESQQ.

Residues 9 to 19 (PSPTGYLHVGG) carry the 'HIGH' region motif. Residues cysteine 98, cysteine 100, cysteine 125, and histidine 127 each coordinate Zn(2+). Residues 237 to 241 (KLSKR) carry the 'KMSKS' region motif. Lysine 240 is an ATP binding site.

The protein belongs to the class-I aminoacyl-tRNA synthetase family. Glutamate--tRNA ligase type 1 subfamily. In terms of assembly, monomer. Zn(2+) serves as cofactor.

Its subcellular location is the cytoplasm. It carries out the reaction tRNA(Glu) + L-glutamate + ATP = L-glutamyl-tRNA(Glu) + AMP + diphosphate. Functionally, catalyzes the attachment of glutamate to tRNA(Glu) in a two-step reaction: glutamate is first activated by ATP to form Glu-AMP and then transferred to the acceptor end of tRNA(Glu). This Salmonella arizonae (strain ATCC BAA-731 / CDC346-86 / RSK2980) protein is Glutamate--tRNA ligase.